Reading from the N-terminus, the 318-residue chain is uncharacterized protein (318 aa).

The protein to A.aeolicus AA07 and AA11.

This is an uncharacterized protein from Aquifex aeolicus (strain VF5).